We begin with the raw amino-acid sequence, 446 residues long: tRNA(Ile2) 2-agmatinylcytidine synthetase TiaS (446 aa).

It belongs to the TiaS family.

The protein localises to the cytoplasm. It carries out the reaction cytidine(34) in tRNA(Ile2) + agmatine + ATP + H2O = 2-agmatinylcytidine(34) in tRNA(Ile2) + AMP + 2 phosphate + 2 H(+). ATP-dependent agmatine transferase that catalyzes the formation of 2-agmatinylcytidine (agm2C) at the wobble position (C34) of tRNA(Ile2), converting the codon specificity from AUG to AUA. The polypeptide is tRNA(Ile2) 2-agmatinylcytidine synthetase TiaS (Cenarchaeum symbiosum (strain A)).